The sequence spans 197 residues: Elongation factor Ts (197 aa).

The involved in Mg(2+) ion dislocation from EF-Tu stretch occupies residues 81–84 (TDFV).

Belongs to the EF-Ts family.

Its subcellular location is the cytoplasm. Functionally, associates with the EF-Tu.GDP complex and induces the exchange of GDP to GTP. It remains bound to the aminoacyl-tRNA.EF-Tu.GTP complex up to the GTP hydrolysis stage on the ribosome. This Petrotoga mobilis (strain DSM 10674 / SJ95) protein is Elongation factor Ts.